Consider the following 1438-residue polypeptide: DNA polymerase III PolC-type (1438 aa).

In terms of domain architecture, Exonuclease spans 422–578 (YVVFDVETTG…YDTEATAYIF (157 aa)).

It belongs to the DNA polymerase type-C family. PolC subfamily.

The protein resides in the cytoplasm. The enzyme catalyses DNA(n) + a 2'-deoxyribonucleoside 5'-triphosphate = DNA(n+1) + diphosphate. Required for replicative DNA synthesis. This DNA polymerase also exhibits 3' to 5' exonuclease activity. This Staphylococcus aureus (strain MSSA476) protein is DNA polymerase III PolC-type.